The primary structure comprises 526 residues: Alpha-ketoglutaric semialdehyde dehydrogenase (526 aa).

NADP(+) is bound by residues 159-160 (SN), 185-188 (KAHS), and 240-241 (GS). Catalysis depends on glutamate 264, which acts as the Proton acceptor. Cysteine 301 serves as the catalytic Nucleophile. Glutamate 393 is an NADP(+) binding site.

It belongs to the aldehyde dehydrogenase family.

The enzyme catalyses 2,5-dioxopentanoate + NADP(+) + H2O = 2-oxoglutarate + NADPH + 2 H(+). Its pathway is carbohydrate acid metabolism; D-glucarate degradation. Functionally, catalyzes the NAD(P)(+)-dependent oxidation of alpha-ketoglutaric semialdehyde (alphaKGSA) to alpha-ketoglutarate in the D-glutarate degradation pathway. This is Alpha-ketoglutaric semialdehyde dehydrogenase from Acinetobacter baylyi (strain ATCC 33305 / BD413 / ADP1).